Consider the following 473-residue polypeptide: Ribulose bisphosphate carboxylase large chain (473 aa).

The propeptide occupies 1-2 (MS). N-acetylproline is present on proline 3. The residue at position 14 (lysine 14) is an N6,N6,N6-trimethyllysine. Substrate contacts are provided by asparagine 123 and threonine 173. Lysine 175 serves as the catalytic Proton acceptor. Lysine 177 contacts substrate. Residues lysine 201, aspartate 203, and glutamate 204 each coordinate Mg(2+). Lysine 201 carries the N6-carboxylysine modification. Histidine 294 functions as the Proton acceptor in the catalytic mechanism. Arginine 295, histidine 327, and serine 379 together coordinate substrate.

Belongs to the RuBisCO large chain family. Type I subfamily. As to quaternary structure, heterohexadecamer of 8 large chains and 8 small chains; disulfide-linked. The disulfide link is formed within the large subunit homodimers. Mg(2+) is required as a cofactor. The disulfide bond which can form in the large chain dimeric partners within the hexadecamer appears to be associated with oxidative stress and protein turnover.

The protein resides in the plastid. Its subcellular location is the chloroplast. The catalysed reaction is 2 (2R)-3-phosphoglycerate + 2 H(+) = D-ribulose 1,5-bisphosphate + CO2 + H2O. It carries out the reaction D-ribulose 1,5-bisphosphate + O2 = 2-phosphoglycolate + (2R)-3-phosphoglycerate + 2 H(+). Functionally, ruBisCO catalyzes two reactions: the carboxylation of D-ribulose 1,5-bisphosphate, the primary event in carbon dioxide fixation, as well as the oxidative fragmentation of the pentose substrate in the photorespiration process. Both reactions occur simultaneously and in competition at the same active site. The polypeptide is Ribulose bisphosphate carboxylase large chain (Cajanus cajan (Pigeon pea)).